Here is a 244-residue protein sequence, read N- to C-terminus: Myrosinase MB1 (244 aa).

A glycan (N-linked (GlcNAc...) asparagine) is linked at Asn32. Position 51 (Tyr51) interacts with substrate. Glu125 serves as the catalytic Nucleophile. Substrate is bound by residues Trp173 and 180–181 (EF). The N-linked (GlcNAc...) asparagine glycan is linked to Asn216.

This sequence belongs to the glycosyl hydrolase 1 family. Homodimer. In vacuoles called myrosin grains of a certain class of cells, myrosin cells, distributed in the cotyledons and the axis of the embryo as well as in different organs of the growing plant.

The protein resides in the vacuole. It catalyses the reaction a thioglucoside + H2O = a sugar + a thiol.. Degradation of glucosinolates (glucose residue linked by a thioglucoside bound to an amino acid derivative) to glucose, sulfate and any of the products: thiocyanates, isothiocyanates, nitriles, epithionitriles or oxazolidine-2-thiones. This Sinapis alba (White mustard) protein is Myrosinase MB1.